Reading from the N-terminus, the 1137-residue chain is Protein sel-1 homolog 3 (1137 aa).

Residues 1–42 form a disordered region; the sequence is MQWRGAGLWWPRRRQQQQQQQPPPPAFGPPAAAMVPPSRGVS. N-linked (GlcNAc...) asparagine glycans are attached at residues Asn-206 and Asn-387. Sel1-like repeat units lie at residues 575–609, 611–647, 694–730, 732–767, 768–800, 801–839, and 840–877; these read HKAS…GQGS, RLSS…TKTP, AAAQ…LETE, PALI…SKGL, HQAV…EMGN, PDAS…QGGH, and IEGT…EKNG. Residue Ser-613 is modified to Phosphoserine. N-linked (GlcNAc...) asparagine glycosylation occurs at Asn-942. The Sel1-like 8 repeat unit spans residues 952–988; it reads SFAYLKMGDLYYYGHQNQSQDLELSVQMYAQAALDGD. The chain crosses the membrane as a helical span at residues 1067 to 1087; sequence LIYFLGTFLLSVVIAWMVLYL. A disordered region spans residues 1100–1137; that stretch reads AWVSADPTSSTPSPAVPPAADASDHDPPMMANGPEPRG. Over residues 1102-1120 the composition is skewed to low complexity; that stretch reads VSADPTSSTPSPAVPPAAD.

The protein resides in the membrane. The protein is Protein sel-1 homolog 3 (Sel1l3) of Mus musculus (Mouse).